The sequence spans 528 residues: GMP synthase [glutamine-hydrolyzing] (528 aa).

In terms of domain architecture, Glutamine amidotransferase type-1 spans S13–D204. The active-site Nucleophile is the C90. Residues H178 and E180 contribute to the active site. In terms of domain architecture, GMPS ATP-PPase spans W205 to R403. S232 to S238 provides a ligand contact to ATP.

In terms of assembly, homodimer.

It carries out the reaction XMP + L-glutamine + ATP + H2O = GMP + L-glutamate + AMP + diphosphate + 2 H(+). It functions in the pathway purine metabolism; GMP biosynthesis; GMP from XMP (L-Gln route): step 1/1. Its function is as follows. Catalyzes the synthesis of GMP from XMP. The chain is GMP synthase [glutamine-hydrolyzing] from Prochlorococcus marinus (strain SARG / CCMP1375 / SS120).